A 634-amino-acid chain; its full sequence is DNA-directed RNA polymerase subunit gamma (634 aa).

Residues Cys74, Cys76, Cys89, and Cys92 each contribute to the Zn(2+) site. Mg(2+)-binding residues include Asp471, Asp473, and Asp475.

The protein belongs to the RNA polymerase beta' chain family. RpoC1 subfamily. In cyanobacteria the RNAP catalytic core is composed of 2 alpha, 1 beta, 1 beta', 1 gamma and 1 omega subunit. When a sigma factor is associated with the core the holoenzyme is formed, which can initiate transcription. The cofactor is Mg(2+). Zn(2+) serves as cofactor.

The enzyme catalyses RNA(n) + a ribonucleoside 5'-triphosphate = RNA(n+1) + diphosphate. Functionally, DNA-dependent RNA polymerase catalyzes the transcription of DNA into RNA using the four ribonucleoside triphosphates as substrates. This chain is DNA-directed RNA polymerase subunit gamma, found in Synechococcus sp. (strain CC9311).